The following is a 403-amino-acid chain: Pantothenate kinase (403 aa).

Phosphoserine occurs at positions 80, 82, and 84.

The protein belongs to the type II pantothenate kinase family.

The protein resides in the cytoplasm. It is found in the nucleus. The enzyme catalyses (R)-pantothenate + ATP = (R)-4'-phosphopantothenate + ADP + H(+). Its pathway is cofactor biosynthesis; coenzyme A biosynthesis; CoA from (R)-pantothenate: step 1/5. Regulated by feedback inhibition by malonyl-CoA. Its function is as follows. Plays a role in the physiological regulation of the intracellular CoA concentration. The chain is Pantothenate kinase from Schizosaccharomyces pombe (strain 972 / ATCC 24843) (Fission yeast).